The following is a 117-amino-acid chain: MDMRVLAQLLGLLLLCFPGARCDIQMTQSPSSLSASVGDRVTITCRASQGISSWLAWYQQKPEKAPKSLIYAASSLQSGVPSRFSGSGSGTDFTLTISSLQPEDFATYYCQQYNSYP.

Positions 1–22 (MDMRVLAQLLGLLLLCFPGARC) are cleaved as a signal peptide. Residues 23–45 (DIQMTQSPSSLSASVGDRVTITC) are framework-1. The 94-residue stretch at 24-117 (IQMTQSPSSL…YYCQQYNSYP (94 aa)) folds into the Ig-like domain. An intrachain disulfide couples Cys-45 to Cys-110. The interval 46 to 56 (RASQGISSWLA) is complementarity-determining-1. A framework-2 region spans residues 57-71 (WYQQKPEKAPKSLIY). A complementarity-determining-2 region spans residues 72–78 (AASSLQS). Positions 79–110 (GVPSRFSGSGSGTDFTLTISSLQPEDFATYYC) are framework-3. Residues 111–117 (QQYNSYP) form a complementarity-determining-3 region.

Immunoglobulins are composed of two identical heavy chains and two identical light chains; disulfide-linked.

It localises to the secreted. Its subcellular location is the cell membrane. Functionally, v region of the variable domain of immunoglobulin light chains that participates in the antigen recognition. Immunoglobulins, also known as antibodies, are membrane-bound or secreted glycoproteins produced by B lymphocytes. In the recognition phase of humoral immunity, the membrane-bound immunoglobulins serve as receptors which, upon binding of a specific antigen, trigger the clonal expansion and differentiation of B lymphocytes into immunoglobulins-secreting plasma cells. Secreted immunoglobulins mediate the effector phase of humoral immunity, which results in the elimination of bound antigens. The antigen binding site is formed by the variable domain of one heavy chain, together with that of its associated light chain. Thus, each immunoglobulin has two antigen binding sites with remarkable affinity for a particular antigen. The variable domains are assembled by a process called V-(D)-J rearrangement and can then be subjected to somatic hypermutations which, after exposure to antigen and selection, allow affinity maturation for a particular antigen. The polypeptide is Immunoglobulin kappa variable 1D-16 (Homo sapiens (Human)).